Consider the following 333-residue polypeptide: cGAMP-activated phospholipase (333 aa).

The PNPLA domain occupies 10 to 191 (LALSGGGYRG…VGNAPGLFGL (182 aa)). The GXGXXG signature appears at 14–19 (GGGYRG). A GXSXG motif is present at residues 46–50 (GTSAG). Ser48 serves as the catalytic Nucleophile. Residue Asp178 is the Proton acceptor of the active site. The DGA/G signature appears at 178–180 (DGG).

This sequence belongs to the patatin family.

It catalyses the reaction a 1,2-diacyl-sn-glycero-3-phosphocholine + H2O = a 2-acyl-sn-glycero-3-phosphocholine + a fatty acid + H(+). It carries out the reaction 1,2-di-(9Z-octadecenoyl)-sn-glycero-3-phosphoethanolamine + 2 H2O = sn-glycero-3-phosphoethanolamine + 2 (9Z)-octadecenoate + 2 H(+). Its activity is regulated as follows. Phospholipase activity is specifically activated upon cGAMP binding, which is produced by the cognate cyclic nucleotide synthase encoded in the same operon. Is not activated by cyclic dinucleotides 2',3'-cGAMP, c-diAMP or 3',3'-c-diGMP. In terms of biological role, effector phospholipase of a CBASS antiviral system. CBASS (cyclic oligonucleotide-based antiphage signaling system) provides immunity against bacteriophages. The CD-NTase protein (CdnA) synthesizes cyclic nucleotides in response to infection; these serve as specific second messenger signals. The signals activate a diverse range of effectors, leading to bacterial cell death and thus abortive phage infection. A type II-A(GA) CBASS system. Its function is as follows. Phospholipase that is activated upon binding to the cyclic dinucleotide (CDN) second messenger 3',3'-cyclic GMP-AMP (cGAMP). Degrades phospholipids in the cell membrane. Functionally, the capV-cdnA-cap2-cap3 operon provides about 10(4)-fold protection in strain BWHPSA011 against infection by phage PaMx41. In P.aeruginosa strain PAO1 it confers protection against phages PaMx41 and JBD18 but not JBD67 (JBD18 and JBD67 do not replicate in BWHPSA011 / Pa011). When acb2 in JBD67 is deleted this CBASS operon then protects against JDB67 also. This CBASS system limits prophage induction of lysogenized JBD67 as well as viral lytic replication. This chain is cGAMP-activated phospholipase, found in Pseudomonas aeruginosa (strain BWHPSA011 / Pa011).